The chain runs to 303 residues: MGLDIQTEIDKIVIEKVKPEVEYYDVMGGSHRWEVKVHDHGKVALVDTMPRLAPVGQTADFSICQAARVSYGAGTKKVTEDKGLIRYLYRHQHTSPFEMVEFKFHCVMPVFIARQWIRHRTANVNEYSARYSVLPDKFYHPSIEEVRKQSTSNRQGGEEALEPKTAQEFLDYLDKVEENYKTYNELLEKGLSRELGRIGLPVSIYTEWYWKIDLHNLFHFLRLRMDSHSQKEIRDYANTIFALIRPIVPVACEAFIDYAFESLKLTRLEIEAIRTGSPLNTTNKREIEEFEEKKKLLFPNTQA.

The ThyX domain maps to 41–258 (GKVALVDTMP…PVACEAFIDY (218 aa)). Residues Ser-95, 118 to 120 (RHR), and Glu-126 contribute to the FAD site. Residues 115–118 (QWIR), 126–130 (EYSAR), and Arg-197 contribute to the dUMP site. A ThyX motif motif is present at residues 118-128 (RHRTANVNEYS). Residues 213 to 215 (DLH) and His-219 contribute to the FAD site. Arg-224 is a binding site for dUMP. The active-site Involved in ionization of N3 of dUMP, leading to its activation is the Arg-224.

The protein belongs to the thymidylate synthase ThyX family. In terms of assembly, homotetramer. FAD is required as a cofactor.

It catalyses the reaction dUMP + (6R)-5,10-methylene-5,6,7,8-tetrahydrofolate + NADPH + H(+) = dTMP + (6S)-5,6,7,8-tetrahydrofolate + NADP(+). It participates in pyrimidine metabolism; dTTP biosynthesis. Catalyzes the reductive methylation of 2'-deoxyuridine-5'-monophosphate (dUMP) to 2'-deoxythymidine-5'-monophosphate (dTMP) while utilizing 5,10-methylenetetrahydrofolate (mTHF) as the methyl donor, and NADPH and FADH(2) as the reductant. In Dictyostelium discoideum (Social amoeba), this protein is Flavin-dependent thymidylate synthase (thyA).